The following is a 363-amino-acid chain: Ethanol acetyltransferase 1 (363 aa).

Residues M1–Y19 constitute a mitochondrion transit peptide. The AB hydrolase-1 domain maps to P65–S164. Active-site charge relay system residues include S138, D162, and H313.

It belongs to the AB hydrolase superfamily.

It is found in the mitochondrion. It carries out the reaction ethanol + acetyl-CoA = ethyl acetate + CoA. The catalysed reaction is acetyl-CoA + H2O = acetate + CoA + H(+). The enzyme catalyses ethyl acetate + H2O = ethanol + acetate + H(+). Alcohol acetyltransferase that catalyzes the synthesis of ethyl acetate from ethanol and acetyl-CoA. Can also function as a thioesterase by hydrolyzing acetyl-CoA in the absence of ethanol, as well as esterase hydrolyzing ethyl acetate. The sequence is that of Ethanol acetyltransferase 1 (EAT1) from Kluyveromyces marxianus (strain DMKU3-1042 / BCC 29191 / NBRC 104275) (Yeast).